A 176-amino-acid chain; its full sequence is Large ribosomal subunit protein uL6 (176 aa).

Basic and acidic residues predominate over residues 156-170; sequence YKGKGVRYADEQVRR. The disordered stretch occupies residues 156–176; the sequence is YKGKGVRYADEQVRRKEAKKK.

It belongs to the universal ribosomal protein uL6 family. In terms of assembly, part of the 50S ribosomal subunit.

Functionally, this protein binds to the 23S rRNA, and is important in its secondary structure. It is located near the subunit interface in the base of the L7/L12 stalk, and near the tRNA binding site of the peptidyltransferase center. The protein is Large ribosomal subunit protein uL6 of Shewanella woodyi (strain ATCC 51908 / MS32).